The sequence spans 227 residues: MLHLVDYALLKPYLTLEEVVRGAQRAEELGVAAYCVNPVYVPYVRRVLRRVKLCAVVDFPFGAMPTAVRAALVERLADYVEELDIVAPIGLVKSHMWADVRRDLITVVGAAGGRVVKVIVEEPYLTDEERYRLYDIVAESGAHFIKSSTGFAEEGYAKQLGNPIYSTPERAAAIARYIRERGYKLGVKMAGGIRTAEQAKAIIDAIGFGIDPTRVRLGTSTPEVLKT.

Aspartate 84 serves as the catalytic Proton donor/acceptor. Lysine 146 serves as the catalytic Schiff-base intermediate with acetaldehyde. Residue lysine 188 is the Proton donor/acceptor of the active site.

This sequence belongs to the DeoC/FbaB aldolase family. DeoC type 1 subfamily.

It localises to the cytoplasm. It catalyses the reaction 2-deoxy-D-ribose 5-phosphate = D-glyceraldehyde 3-phosphate + acetaldehyde. Its pathway is carbohydrate degradation; 2-deoxy-D-ribose 1-phosphate degradation; D-glyceraldehyde 3-phosphate and acetaldehyde from 2-deoxy-alpha-D-ribose 1-phosphate: step 2/2. Its function is as follows. Catalyzes a reversible aldol reaction between acetaldehyde and D-glyceraldehyde 3-phosphate to generate 2-deoxy-D-ribose 5-phosphate. The protein is Deoxyribose-phosphate aldolase of Pyrobaculum islandicum (strain DSM 4184 / JCM 9189 / GEO3).